We begin with the raw amino-acid sequence, 186 residues long: Tumor necrosis factor alpha-induced protein 8-like protein 1 (186 aa).

A coiled-coil region spans residues 37–70 (EVLDELYRVTKEYTRNRKEAQKIIKNLIKMVVKL).

The protein belongs to the TNFAIP8 family.

Its subcellular location is the cytoplasm. The sequence is that of Tumor necrosis factor alpha-induced protein 8-like protein 1 (tnfaip8l1) from Danio rerio (Zebrafish).